Consider the following 274-residue polypeptide: Serine protease 28 (274 aa).

Residues 1–26 (MFRLLLLALSCLESTVFMASVSISRS) form the signal peptide. One can recognise a Peptidase S1 domain in the interval 31 to 274 (IVGGQRTPPG…SLAWIHQHIQ (244 aa)). Cys62 and Cys78 are disulfide-bonded. Residue His77 is the Charge relay system of the active site. N-linked (GlcNAc...) asparagine glycosylation is present at Asn106. Asp124 functions as the Charge relay system in the catalytic mechanism. Disulfide bonds link Cys158/Cys233, Cys191/Cys214, and Cys223/Cys251. Ser227 functions as the Charge relay system in the catalytic mechanism.

The protein belongs to the peptidase S1 family. Homooligomer, heterodimer and heterotetramer. Able to form homo- and hetero- tetrameric structures. Heterotetramer is far more stable than the homotetramer. Expressed in embryos throughout the preimplantation period, during blastocyst hatching and embryo outgrowth. Found in uterus especially in glandular epithelium.

It localises to the secreted. Inhibited by benzamidine, (4-amidino-phenyl)-methane-sulfonyl (APMSF), N-p-tosyl-L-lysine chloromethylketone (TLCK), gabexate, mesylate, BABIM and trypsin soybean inhibitor (TSI). Its function is as follows. Involved in embryo hatching and implantation. In Mus musculus (Mouse), this protein is Serine protease 28 (Prss28).